The following is a 110-amino-acid chain: MINNVGIDIVENKRIKLKEEFIVKVLSANEIKTFNIKNKKQKREFLAGRWAIKEAIIKTLDQPISMNKIDIEYINDKPVIKNQELQNILISISHEKKYAVGIALKQCDNK.

Residues Asp-8 and Glu-54 each contribute to the Mg(2+) site.

It belongs to the P-Pant transferase superfamily. AcpS family. Mg(2+) is required as a cofactor.

The protein localises to the cytoplasm. The catalysed reaction is apo-[ACP] + CoA = holo-[ACP] + adenosine 3',5'-bisphosphate + H(+). Functionally, transfers the 4'-phosphopantetheine moiety from coenzyme A to a Ser of acyl-carrier-protein. This Mycoplasma capricolum subsp. capricolum (strain California kid / ATCC 27343 / NCTC 10154) protein is Holo-[acyl-carrier-protein] synthase.